Reading from the N-terminus, the 312-residue chain is Phosphate system positive regulatory protein PHO4 (312 aa).

The segment at 1-31 is interaction with PHO80; it reads MGRTTSEGIHGFVDDLEPKSSILDKVGDFIT. Residues 35–71 form a disordered region; it reads KRHDGREDFNEQNDELNSQENHNSSENGNENENEQDS. Residues 49 to 62 are compositionally biased toward low complexity; it reads ELNSQENHNSSENG. The 9aaTAD motif lies at 75-83; the sequence is DDLDRAFEL. A transcription activation domain region spans residues 75–99; sequence DDLDRAFELVEGMDMDWMMPSHAHH. 4 positions are modified to phosphoserine; by PHO85: Ser-100, Ser-114, Ser-128, and Ser-152. 2 stretches are compositionally biased toward polar residues: residues 138–154 and 196–210; these read TTSA…SSPY and PSNS…TAKT. The disordered stretch occupies residues 138–259; it reads TTSANKVTKN…DKRESHKHAE (122 aa). A Nuclear localization signal motif is present at residues 140-166; it reads SANKVTKNKSNSSPYLNKRRGKPGPDS. The segment at 156-200 is interaction with PHO80; that stretch reads NKRRGKPGPDSATSLFELPDSVIPTPKPKPKPKQYPKVILPSNST. The segment at 201-218 is interaction with PHO2; it reads RRVSPVTAKTSSSAEGVV. The segment at 203–227 is involved in oligomerization; that stretch reads VSPVTAKTSSSAEGVVVASESPVIA. Phosphoserine is present on Ser-204. The span at 211–235 shows a compositional bias: low complexity; the sequence is SSSAEGVVVASESPVIAPHGSSHSR. Ser-223 carries the post-translational modification Phosphoserine; by PHO85. Phosphoserine is present on residues Ser-242 and Ser-243. Residues 248 to 259 show a composition bias toward basic and acidic residues; that stretch reads DDDKRESHKHAE. Residues 250 to 306 enclose the bHLH domain; that stretch reads DKRESHKHAEQARRNRLAVALHELASLIPAEWKQQNVSAAPSKATTVEAACRYIRHL.

As to quaternary structure, binds DNA as a homodimer. Interacts with transcription factor PHO2 and binds cooperatively to PHO5 UAS. Interacts with the cyclin-CDK PHO80-PHO85 and the CDK inhibitor (CKI) PHO81. In terms of processing, phosphorylated by the cyclin-CDK PHO80-PHO85 at five residues under high-phosphate conditions, preventing PHO4 from activating the structural PHO genes. Phosphorylation of Ser-114 and Ser-128 promotes nuclear export. Phosphorylation of Ser-152 decreases nuclear import. Phosphorylation of Ser-223 decreases the binding affinity for PHO2.

Its subcellular location is the cytoplasm. It localises to the nucleus. In terms of biological role, transcriptional activator that regulates the expression of repressible phosphatase under phosphate starvation conditions. Binds to the upstream activating sequence (UAS) of several phosphatase encoding PHO genes. Inhibited by the cyclin-CDK PHO80-PHO85 under high-phosphate conditions. The polypeptide is Phosphate system positive regulatory protein PHO4 (PHO4) (Saccharomyces cerevisiae (strain ATCC 204508 / S288c) (Baker's yeast)).